The chain runs to 61 residues: Short neurotoxin 2 (61 aa).

Cystine bridges form between Cys3–Cys23, Cys17–Cys40, Cys42–Cys53, and Cys54–Cys59.

This sequence belongs to the three-finger toxin family. Short-chain subfamily. Type I alpha-neurotoxin sub-subfamily. Expressed by the venom gland.

It localises to the secreted. Binds to muscle nicotinic acetylcholine receptor (nAChR) and inhibit acetylcholine from binding to the receptor, thereby impairing neuromuscular transmission. In Naja nivea (Cape cobra), this protein is Short neurotoxin 2.